The chain runs to 557 residues: Urocanate hydratase (557 aa).

The interval 1–20 (MSNPRHNEREVRSPRGDELN) is disordered. Residues 52 to 53 (GG), Q130, 176 to 178 (GMG), E196, R201, 242 to 243 (NA), 263 to 267 (QTSAH), 273 to 274 (YL), and Y322 each bind NAD(+). The active site involves C410. G492 provides a ligand contact to NAD(+).

It belongs to the urocanase family. NAD(+) serves as cofactor.

Its subcellular location is the cytoplasm. It carries out the reaction 4-imidazolone-5-propanoate = trans-urocanate + H2O. It participates in amino-acid degradation; L-histidine degradation into L-glutamate; N-formimidoyl-L-glutamate from L-histidine: step 2/3. Catalyzes the conversion of urocanate to 4-imidazolone-5-propionate. In Brucella anthropi (strain ATCC 49188 / DSM 6882 / CCUG 24695 / JCM 21032 / LMG 3331 / NBRC 15819 / NCTC 12168 / Alc 37) (Ochrobactrum anthropi), this protein is Urocanate hydratase.